Reading from the N-terminus, the 166-residue chain is NADH-ubiquinone oxidoreductase chain 6 (166 aa).

Helical transmembrane passes span M1 to S21, I26 to L46, G47 to F67, T86 to F106, and C139 to L159.

Belongs to the complex I subunit 6 family. Core subunit of respiratory chain NADH dehydrogenase (Complex I) which is composed of 45 different subunits.

The protein localises to the mitochondrion inner membrane. It catalyses the reaction a ubiquinone + NADH + 5 H(+)(in) = a ubiquinol + NAD(+) + 4 H(+)(out). Its function is as follows. Core subunit of the mitochondrial membrane respiratory chain NADH dehydrogenase (Complex I) which catalyzes electron transfer from NADH through the respiratory chain, using ubiquinone as an electron acceptor. Essential for the catalytic activity and assembly of complex I. The protein is NADH-ubiquinone oxidoreductase chain 6 (MT-ND6) of Tachyglossus aculeatus aculeatus (Southeast Australian short-beaked echidna).